The sequence spans 419 residues: Histidine--tRNA ligase (419 aa).

Belongs to the class-II aminoacyl-tRNA synthetase family. In terms of assembly, homodimer.

It localises to the cytoplasm. The enzyme catalyses tRNA(His) + L-histidine + ATP = L-histidyl-tRNA(His) + AMP + diphosphate + H(+). The polypeptide is Histidine--tRNA ligase (Trichlorobacter lovleyi (strain ATCC BAA-1151 / DSM 17278 / SZ) (Geobacter lovleyi)).